The sequence spans 132 residues: Small ribosomal subunit protein uS8 (132 aa).

This sequence belongs to the universal ribosomal protein uS8 family. In terms of assembly, part of the 30S ribosomal subunit. Contacts proteins S5 and S12.

Functionally, one of the primary rRNA binding proteins, it binds directly to 16S rRNA central domain where it helps coordinate assembly of the platform of the 30S subunit. The chain is Small ribosomal subunit protein uS8 from Rhizobium etli (strain CIAT 652).